The chain runs to 538 residues: Phosphoenolpyruvate carboxykinase (ATP) (538 aa).

Positions 64, 205, and 211 each coordinate substrate. Residues Lys-211, His-230, and 246-254 (GLSGTGKTT) each bind ATP. Mn(2+) contacts are provided by Lys-211 and His-230. Asp-267 is a Mn(2+) binding site. Residues Glu-295, Arg-331, 447-448 (RI), and Thr-453 each bind ATP. Arg-331 is a binding site for substrate.

The protein belongs to the phosphoenolpyruvate carboxykinase (ATP) family. In terms of assembly, monomer. The cofactor is Mn(2+).

It localises to the cytoplasm. It carries out the reaction oxaloacetate + ATP = phosphoenolpyruvate + ADP + CO2. It participates in carbohydrate biosynthesis; gluconeogenesis. Involved in the gluconeogenesis. Catalyzes the conversion of oxaloacetate (OAA) to phosphoenolpyruvate (PEP) through direct phosphoryl transfer between the nucleoside triphosphate and OAA. This is Phosphoenolpyruvate carboxykinase (ATP) from Baumannia cicadellinicola subsp. Homalodisca coagulata.